Here is a 389-residue protein sequence, read N- to C-terminus: Succinyl-diaminopimelate desuccinylase (389 aa).

Residue His-72 coordinates Zn(2+). Residue Asp-74 is part of the active site. Asp-105 contributes to the Zn(2+) binding site. The Proton acceptor role is filled by Glu-144. The Zn(2+) site is built by Glu-145, Glu-173, and His-362.

Belongs to the peptidase M20A family. DapE subfamily. In terms of assembly, homodimer. Zn(2+) serves as cofactor. Co(2+) is required as a cofactor.

It carries out the reaction N-succinyl-(2S,6S)-2,6-diaminopimelate + H2O = (2S,6S)-2,6-diaminopimelate + succinate. It participates in amino-acid biosynthesis; L-lysine biosynthesis via DAP pathway; LL-2,6-diaminopimelate from (S)-tetrahydrodipicolinate (succinylase route): step 3/3. In terms of biological role, catalyzes the hydrolysis of N-succinyl-L,L-diaminopimelic acid (SDAP), forming succinate and LL-2,6-diaminopimelate (DAP), an intermediate involved in the bacterial biosynthesis of lysine and meso-diaminopimelic acid, an essential component of bacterial cell walls. The chain is Succinyl-diaminopimelate desuccinylase from Rhodopseudomonas palustris (strain HaA2).